Here is an 835-residue protein sequence, read N- to C-terminus: Cell division control protein 48 (835 aa).

Residues 1–21 are disordered; it reads MGEEHKPLLDASGVDPREEDK. 257-263 serves as a coordination point for ATP; the sequence is PGTGKTL. Glycyl lysine isopeptide (Lys-Gly) (interchain with G-Cter in ubiquitin) cross-links involve residues lysine 305, lysine 322, and lysine 346. Positions 358 and 394 each coordinate ATP. 2 positions are modified to phosphoserine: serine 472 and serine 519. Lysine 522 is covalently cross-linked (Glycyl lysine isopeptide (Lys-Gly) (interchain with G-Cter in ubiquitin)). An ATP-binding site is contributed by 531 to 536; the sequence is GTGKTL. Residues lysine 539, lysine 594, and lysine 673 each participate in a glycyl lysine isopeptide (Lys-Gly) (interchain with G-Cter in ubiquitin) cross-link. Positions 720–729 are enriched in basic and acidic residues; it reads EAEKEVKVEG. The interval 720 to 746 is disordered; it reads EAEKEVKVEGEDVEMTDEGAKAEQEPE. A Phosphothreonine modification is found at threonine 735. Phosphoserine is present on serine 770. The tract at residues 792-835 is disordered; sequence SNFNFNDAPLGTTATDNANSNNSAPSGAGAAFGSNAEEDDDLYS. Low complexity predominate over residues 802–826; that stretch reads GTTATDNANSNNSAPSGAGAAFGSN.

This sequence belongs to the AAA ATPase family. In terms of assembly, component of the heterotrimeric CDC48-NPL4-UFD1 ATPase complex. The CDC48-NPL4-UFD1 ATPase complex interacts with the HRD1 ubiquitin ligase complex composed of the E3 ligase HRD1, its cofactors HRD3, USA1 and DER1, substrate recruiting factor YOS9 and CDC48-binding protein UBX2. Interaction between the complexes is mediated by interaction between CDC48-NPL4-UFD1 complex member CDC48 and HRD1 complex member UBX2. Forms a complex composed of CDC48, NPL4, UFD1, UFD2 and SHP1. Forms a complex composed of CDC48, NPL4, UFD1, DOA1, SHP1 and deubiquitinase OTU1; within the complex interacts with DOA1/UFD3 and OTU1 to prevent multiubiquitination of substrates. Interacts with UFD2, to add further ubiquitin moieties; the interaction with UFD2 is prevented by DOA1/UFD3. Forms a complex composed of CDC48, DOA1, deubiquitinase UBP3 and probably BRE5; within the complex interacts with DOA1 and UBP3. Interacts (via C-terminus) with DOA1 (via PUL domain); the interaction is direct. Interacts with NPL4. Interacts with SHP1/UBX1, UBX2, UBX3, UBX4, UBX5, UBX6 and UBX7. Interacts with VMS1; the interaction recruits CDC48 to the mitochondria in response to mitochondrial stress. Component of the ribosome quality control complex (RQC), composed of the E3 ubiquitin ligase RKR1/LTN1, RQC1 and RQC2, as well as CDC48 and its ubiquitin-binding cofactors. RQC forms a stable complex with 60S ribosomal subunits. Interacts with ASE1 and CDC5; the interaction is likely to result in their degradation. Component of the DSCc E3 ligase complexes composed of at least TUL1, DSC2, DSC3, UBX3, CDC48 as well as VLD1 for the vacuole-localized complex or GLD1 for the Golgi/endosome-localized complex.

The protein resides in the microsome. It is found in the endoplasmic reticulum. It localises to the cytoplasm. The enzyme catalyses ATP + H2O = ADP + phosphate + H(+). The first ATP-binding region has low ATPase activity. The second ATP-binding region is responsible for ATPase activity. ATP binding to the first ATP-binding region induces intrinsic activity of the second ATP-binding region. While ATP binding to the first ATP-binding region appears to prevent ATP hydrolysis by the second ATP-binding region, ADP-binding to first region promotes the coordinate and cooperative ATPase cycle of the second ATP-binding region. ATP binding to the first ATP-binding region induces a conformational change, promoting the rotation of the first ATP-binding region relative to the second ATP-binding region in the hexamer. ATP-dependent chaperone which probably uses the energy provided by ATP hydrolysis to generate mechanical force to unfold substrate proteins, disassemble protein complexes, and disaggregate protein aggregates. By recruiting and promoting the degradation of ubiquitinated proteins, plays a role in the ubiquitin fusion degradation (UFD) pathway. Has a role in the endoplasmic reticulum-associated degradation (ERAD) pathway which mediates the cytoplasmic elimination of misfolded proteins exported from the ER. Required for the proteasome-dependent processing/activation of MGA2 and SPT23 transcription factors leading to the subsequent expression of OLE1. Has an additional role in the turnover of OLE1 where it targets ubiquitinated OLE1 and other proteins to the ERAD. Regulates ubiquitin-mediated mitochondria protein degradation. Involved in spindle disassembly probably by promoting the degradation of spindle assembly factors ASE1 and CDC5 at the end of mitosis. Component of the ribosome quality control complex (RQC), a ribosome-associated complex that mediates ubiquitination and extraction of incompletely synthesized nascent chains for proteasomal degradation. CDC48 may provide the mechanical force that dislodges the polyubiquitinated nascent peptides from the exit channel. Required for ribophagy, a process which relocalizes ribosomal particles into the vacuole for degradation in response to starvation. Component of the DSC E3 ubiquitin ligase complexes that tag proteins present in Golgi, endosome and vacuole membranes and function in protein homeostasis under non-stress conditions and support a role in protein quality control. Substrate initially binds through the attached polyubiquitin chain to UDF1/NPL4 and then moves through the pore of the ATPase rings and is thereby unfolded. Acts on a broad range of even well-folded proteins via ubiquitin-binding and unfolding to initiate substrate processing. Involved in degradation of mislocalized tail-anchored transmembrane proteins extracted from the mitochondrion outer membrane by MSP1 and ubiquitinated by DOA10. The protein is Cell division control protein 48 of Saccharomyces cerevisiae (strain ATCC 204508 / S288c) (Baker's yeast).